The primary structure comprises 295 residues: Shikimate dehydrogenase (NADP(+)) (295 aa).

Shikimate is bound by residues 18–20 and Thr-66; that span reads SRS. Lys-70 (proton acceptor) is an active-site residue. Shikimate-binding residues include Asn-91 and Asp-106. NADP(+) contacts are provided by residues 130 to 134 and Met-235; that span reads GNGGA. Tyr-237 provides a ligand contact to shikimate. Residue Gly-258 coordinates NADP(+).

The protein belongs to the shikimate dehydrogenase family. As to quaternary structure, homodimer.

It catalyses the reaction shikimate + NADP(+) = 3-dehydroshikimate + NADPH + H(+). It participates in metabolic intermediate biosynthesis; chorismate biosynthesis; chorismate from D-erythrose 4-phosphate and phosphoenolpyruvate: step 4/7. Functionally, involved in the biosynthesis of the chorismate, which leads to the biosynthesis of aromatic amino acids. Catalyzes the reversible NADPH linked reduction of 3-dehydroshikimate (DHSA) to yield shikimate (SA). The protein is Shikimate dehydrogenase (NADP(+)) of Chlorobium phaeobacteroides (strain DSM 266 / SMG 266 / 2430).